We begin with the raw amino-acid sequence, 406 residues long: Immediate early response gene 5-like protein (406 aa).

2 disordered regions span residues 166–195 and 216–235; these read QPPHGAPHRGQHLEPLQPGPAPLPPPAPAA and AAPSTVAASSPPASTAPSSS. The span at 182–193 shows a compositional bias: pro residues; it reads QPGPAPLPPPAP.

It belongs to the IER family.

The polypeptide is Immediate early response gene 5-like protein (Ier5l) (Mus musculus (Mouse)).